Reading from the N-terminus, the 159-residue chain is ATP synthase subunit b (159 aa).

A helical membrane pass occupies residues 4 to 24; it reads VGINGTLIVQLVTFVILVALL.

It belongs to the ATPase B chain family. F-type ATPases have 2 components, F(1) - the catalytic core - and F(0) - the membrane proton channel. F(1) has five subunits: alpha(3), beta(3), gamma(1), delta(1), epsilon(1). F(0) has three main subunits: a(1), b(2) and c(10-14). The alpha and beta chains form an alternating ring which encloses part of the gamma chain. F(1) is attached to F(0) by a central stalk formed by the gamma and epsilon chains, while a peripheral stalk is formed by the delta and b chains.

It localises to the cell inner membrane. Its function is as follows. F(1)F(0) ATP synthase produces ATP from ADP in the presence of a proton or sodium gradient. F-type ATPases consist of two structural domains, F(1) containing the extramembraneous catalytic core and F(0) containing the membrane proton channel, linked together by a central stalk and a peripheral stalk. During catalysis, ATP synthesis in the catalytic domain of F(1) is coupled via a rotary mechanism of the central stalk subunits to proton translocation. Functionally, component of the F(0) channel, it forms part of the peripheral stalk, linking F(1) to F(0). This chain is ATP synthase subunit b, found in Acidithiobacillus ferrooxidans (strain ATCC 23270 / DSM 14882 / CIP 104768 / NCIMB 8455) (Ferrobacillus ferrooxidans (strain ATCC 23270)).